Here is a 296-residue protein sequence, read N- to C-terminus: Remorin 4.1 (296 aa).

Disordered regions lie at residues methionine 1–asparagine 78, threonine 121–proline 142, and glutamate 242–arginine 266. A compositionally biased stretch (basic and acidic residues) spans alanine 21–histidine 39. Polar residues-rich tracts occupy residues methionine 41 to arginine 53 and proline 62 to asparagine 78. 2 stretches are compositionally biased toward basic and acidic residues: residues threonine 121–valine 135 and arginine 253–arginine 266. A coiled-coil region spans residues methionine 226–threonine 261.

It belongs to the remorin family. In terms of assembly, forms homodimer and heterodimer with REM4.2. Interacts with KIN11. Phosphorylated by KIN11. In terms of processing, probably ubiquitinated and degraded by the 26S proteasome pathway. In terms of tissue distribution, predominantly detected in bud, stem, root, flower, silique, and leaves, and enhanced dramatically in senescence leaf.

Its subcellular location is the cell membrane. Functionally, collaborates with REM4.2 to positively regulate the BCTV and BSCTV susceptibility. The chain is Remorin 4.1 from Arabidopsis thaliana (Mouse-ear cress).